We begin with the raw amino-acid sequence, 177 residues long: Putative membrane protein 165 (177 aa).

Residues Met1 to Ile7 are Intravirion-facing. Residues Ala8–Gly24 traverse the membrane as a helical segment. Over Leu25–Asn166 the chain is Virion surface.

Belongs to the asfivirus envelope protein p22 family.

It localises to the virion membrane. It is found in the host cell membrane. This is Putative membrane protein 165 from African swine fever virus (isolate Pig/Kenya/KEN-50/1950) (ASFV).